We begin with the raw amino-acid sequence, 509 residues long: MQNNVLILDFGSQYTQLIARRVRELNIYCEIYPYHKIPEDLSGFKAVILSGSPFSVRAEDAPHPDLSQIRGKLPILAVCYGAQYFAHFHGGKVEPSDTREYGRANLTVIKDAEPLFENIKENSQVWMSHSDSIIRLPENGVRLASTSDVLNAAYRIEGEQTFAIQFHPEVYHSTDGKQLLENFLIKIAGTKATWTPGKFVDLTVSELKEKVGDDKVVLGLSGGVDSTVAAVLLHKAIGKNLYCIFVNNGLLRKNEFESVLDQYKDMGLNVKGVDASARFLDALKGLSDPEEKRKAIGNTFIEVFDDEAHEIKDVVYLAQGTIYPDVIESVSVNGPSVTIKSHHNVGGLPDFMKLKIVEPLRMLFKDEVRRVGKELGIDKELLGRHPFPGPGLAIRILGDITEEKVRILQEVDHIFIQGLRDWMLYDKVWQAGAILLPIQSVGVMGDERTYEQVVALRAVESTDGMTADWVNLPYEFLQKTSNTIINRVKGVNRVVYDISSKPPATIEWE.

The Glutamine amidotransferase type-1 domain maps to 4 to 193 (NVLILDFGSQ…LIKIAGTKAT (190 aa)). The Nucleophile role is filled by Cys-79. Residues His-167 and Glu-169 contribute to the active site. The 191-residue stretch at 194–384 (WTPGKFVDLT…LGIDKELLGR (191 aa)) folds into the GMPS ATP-PPase domain. Residue 221-227 (SGGVDST) coordinates ATP.

In terms of assembly, homodimer.

The catalysed reaction is XMP + L-glutamine + ATP + H2O = GMP + L-glutamate + AMP + diphosphate + 2 H(+). It participates in purine metabolism; GMP biosynthesis; GMP from XMP (L-Gln route): step 1/1. Functionally, catalyzes the synthesis of GMP from XMP. The sequence is that of GMP synthase [glutamine-hydrolyzing] from Christiangramia forsetii (strain DSM 17595 / CGMCC 1.15422 / KT0803) (Gramella forsetii).